Here is a 447-residue protein sequence, read N- to C-terminus: Tektin-4 (447 aa).

Coiled coils occupy residues 114–143 (KSELQREIDELSSETDQMMAQKLRLQRALD), 324–348 (KILSEITDQEHQIAALKQAIKDKEA), and 375–423 (FRLM…TNSL).

It belongs to the tektin family. Microtubule inner protein component of sperm flagellar doublet microtubules. In terms of processing, ubiquitinated, leading to its degradation. Deubiquitinated by USP16, promoting its stability.

It is found in the cytoplasm. Its subcellular location is the cytoskeleton. It localises to the cilium axoneme. The protein localises to the flagellum axoneme. Microtubule inner protein (MIP) part of the dynein-decorated doublet microtubules (DMTs) in cilia and flagellar axoneme. Forms filamentous polymers in the walls of ciliary and flagellar microtubules. Contributes to normal sperm motility. The protein is Tektin-4 (Tekt4) of Rattus norvegicus (Rat).